The following is a 130-amino-acid chain: Small ribosomal subunit protein uS8 (130 aa).

It belongs to the universal ribosomal protein uS8 family. As to quaternary structure, part of the 30S ribosomal subunit.

In terms of biological role, one of the primary rRNA binding proteins, it binds directly to 16S rRNA central domain where it helps coordinate assembly of the platform of the 30S subunit. In Methanothermobacter thermautotrophicus (strain ATCC 29096 / DSM 1053 / JCM 10044 / NBRC 100330 / Delta H) (Methanobacterium thermoautotrophicum), this protein is Small ribosomal subunit protein uS8.